An 823-amino-acid chain; its full sequence is Putative ankyrin repeat domain-containing protein 20A3 (823 aa).

ANK repeat units lie at residues 66-95, 99-128, 132-161, 165-194, and 198-227; these read QHRT…QIDV, ENRT…NPNL, YGNT…HIEA, DNNT…SSHA, and LRRS…DVFA. Disordered stretches follow at residues 301–343 and 355–402; these read VPEK…EVED and VQTL…LSEN. A compositionally biased stretch (basic and acidic residues) spans 372-384; the sequence is QERHERSEKKQPQ. 3 coiled-coil regions span residues 431–480, 571–724, and 776–805; these read KKLK…KQLE, AFRY…NNST, and LVLE…EKTE.

The sequence is that of Putative ankyrin repeat domain-containing protein 20A3 from Homo sapiens (Human).